The sequence spans 352 residues: N-acetyl-gamma-glutamyl-phosphate reductase (352 aa).

C155 is an active-site residue.

This sequence belongs to the NAGSA dehydrogenase family. Type 1 subfamily.

It is found in the cytoplasm. The enzyme catalyses N-acetyl-L-glutamate 5-semialdehyde + phosphate + NADP(+) = N-acetyl-L-glutamyl 5-phosphate + NADPH + H(+). The protein operates within amino-acid biosynthesis; L-arginine biosynthesis; N(2)-acetyl-L-ornithine from L-glutamate: step 3/4. Catalyzes the NADPH-dependent reduction of N-acetyl-5-glutamyl phosphate to yield N-acetyl-L-glutamate 5-semialdehyde. The protein is N-acetyl-gamma-glutamyl-phosphate reductase of Gloeothece citriformis (strain PCC 7424) (Cyanothece sp. (strain PCC 7424)).